The primary structure comprises 437 residues: MSADYFADFQTVRYEGPDSDNDFAYRWYDKDRVILGKRMEDHLRFAVCMWHTFCWPGSDVFGAGTFTRPWLQGPMDARNAAAKREAALAFVEKLDVPFYCFHDVDVMAEAEGIGEFRSSFAEAVDHLEELQGKHGRKLLWGTANLFGHPRYMAGAATNPDPEVFAWGASQVRDALEATHRLGGANYVLWGGREGYDSILNTEIGIEQENFGRFLSLVVDHKHRIGFKGTILIEPKPHEPTKHQYDFDTQTVFGFLKRFGLESEVKVNIEANHATLSGHTFEHELAMARALGILGSIDANRGDHQNGWDTDQFPNSVEELTLAMLELIRAGGFTDGGFNFDAKVRRQSIDAADLFHGHIGGIDTIAHALVKAAALIEDGKLDAFRAERYAGWQGELGRKIHADGTTLADIADIAVARDLAPVRRSGRQEWCENLINRV.

Active-site residues include His102 and Asp105. Residues Glu233, Glu269, His272, Asp297, Asp308, Asp310, and Asp340 each contribute to the Mg(2+) site.

Belongs to the xylose isomerase family. In terms of assembly, homotetramer. Requires Mg(2+) as cofactor.

The protein localises to the cytoplasm. The enzyme catalyses alpha-D-xylose = alpha-D-xylulofuranose. This is Xylose isomerase from Novosphingobium aromaticivorans (strain ATCC 700278 / DSM 12444 / CCUG 56034 / CIP 105152 / NBRC 16084 / F199).